A 210-amino-acid polypeptide reads, in one-letter code: Probable glutathione peroxidase 8 (210 aa).

Residues 13–35 traverse the membrane as a helical segment; it reads ASRAGLFKVLLSVALCMGSLYLL.

This sequence belongs to the glutathione peroxidase family.

It is found in the membrane. It catalyses the reaction 2 glutathione + H2O2 = glutathione disulfide + 2 H2O. The protein is Probable glutathione peroxidase 8 (gpx8) of Danio rerio (Zebrafish).